The primary structure comprises 706 residues: Polyribonucleotide nucleotidyltransferase (706 aa).

Residues Asp487 and Asp493 each coordinate Mg(2+). Positions 553 to 612 (PRLFTMKISQDKIRDVIGKGGETIRSITAETGTEINIAEDGTITIAATTQEAGDAAKKRI) constitute a KH domain. An S1 motif domain is found at 622–692 (GKVYEGTVVK…DRGRVRLSIK (71 aa)).

It belongs to the polyribonucleotide nucleotidyltransferase family. The cofactor is Mg(2+).

Its subcellular location is the cytoplasm. The catalysed reaction is RNA(n+1) + phosphate = RNA(n) + a ribonucleoside 5'-diphosphate. Involved in mRNA degradation. Catalyzes the phosphorolysis of single-stranded polyribonucleotides processively in the 3'- to 5'-direction. The sequence is that of Polyribonucleotide nucleotidyltransferase from Neisseria gonorrhoeae (strain ATCC 700825 / FA 1090).